We begin with the raw amino-acid sequence, 465 residues long: 3-isopropylmalate dehydratase large subunit (465 aa).

[4Fe-4S] cluster is bound by residues Cys-347, Cys-407, and Cys-410. Residues 416 to 443 form a disordered region; it reads DTLRPGERSASTSNRNFEGRQGPGGRTH.

The protein belongs to the aconitase/IPM isomerase family. LeuC type 1 subfamily. In terms of assembly, heterodimer of LeuC and LeuD. [4Fe-4S] cluster serves as cofactor.

The catalysed reaction is (2R,3S)-3-isopropylmalate = (2S)-2-isopropylmalate. The protein operates within amino-acid biosynthesis; L-leucine biosynthesis; L-leucine from 3-methyl-2-oxobutanoate: step 2/4. Catalyzes the isomerization between 2-isopropylmalate and 3-isopropylmalate, via the formation of 2-isopropylmaleate. In Frankia alni (strain DSM 45986 / CECT 9034 / ACN14a), this protein is 3-isopropylmalate dehydratase large subunit.